Reading from the N-terminus, the 174-residue chain is Repair DNA polymerase X (174 aa).

The involved in ssDNA binding stretch occupies residues 42 to 51 (REEKMLNDVD). Mg(2+)-binding residues include Asp49 and Asp51. Cys81 and Cys86 are oxidised to a cystine. Asp100 is a Mg(2+) binding site.

This sequence belongs to the DNA polymerase type-X family. Mg(2+) is required as a cofactor.

The protein resides in the virion. The enzyme catalyses DNA(n) + a 2'-deoxyribonucleoside 5'-triphosphate = DNA(n+1) + diphosphate. Functionally, error-prone polymerase lacking a proofreading 3'-5' exonuclease which catalyzes the gap-filling reaction during the DNA repair process. Specifically binds intermediates in the single-nucleotide base-excision repair process. Also catalyzes DNA polymerization with low nucleotide-insertion fidelity. Probably acts as a strategic DNA mutase, which gives rise to a rapid emergence of variants. Generates mismatched G-G pairs, in that case, the polymerase first binds the deoxynucleotide followed by mismatch formation. Together with the viral DNA ligase, fills the single nucleotide gaps generated by the AP endonuclease. Binds DNA with high affinity via the helix alphaE. This is Repair DNA polymerase X from African swine fever virus (isolate Tick/Malawi/Lil 20-1/1983) (ASFV).